The primary structure comprises 880 residues: Leucine--tRNA ligase (880 aa).

The 'HIGH' region motif lies at 49 to 59 (PYPSGRIHMGH). The 'KMSKS' region motif lies at 638–642 (KMSKS). Residue Lys641 coordinates ATP.

This sequence belongs to the class-I aminoacyl-tRNA synthetase family.

The protein resides in the cytoplasm. It catalyses the reaction tRNA(Leu) + L-leucine + ATP = L-leucyl-tRNA(Leu) + AMP + diphosphate. The polypeptide is Leucine--tRNA ligase (Bartonella henselae (strain ATCC 49882 / DSM 28221 / CCUG 30454 / Houston 1) (Rochalimaea henselae)).